The following is a 332-amino-acid chain: Anthranilate phosphoribosyltransferase (332 aa).

Residues G78, 81–82, S86, 88–91, 106–114, and S118 each bind 5-phospho-alpha-D-ribose 1-diphosphate; these read GD, NIST, and KHGNKSITS. Residue G78 participates in anthranilate binding. Position 90 (S90) interacts with Mg(2+). An anthranilate-binding site is contributed by N109. Residue R163 coordinates anthranilate. Mg(2+) contacts are provided by D222 and E223.

This sequence belongs to the anthranilate phosphoribosyltransferase family. In terms of assembly, homodimer. Mg(2+) is required as a cofactor.

The enzyme catalyses N-(5-phospho-beta-D-ribosyl)anthranilate + diphosphate = 5-phospho-alpha-D-ribose 1-diphosphate + anthranilate. It participates in amino-acid biosynthesis; L-tryptophan biosynthesis; L-tryptophan from chorismate: step 2/5. Catalyzes the transfer of the phosphoribosyl group of 5-phosphorylribose-1-pyrophosphate (PRPP) to anthranilate to yield N-(5'-phosphoribosyl)-anthranilate (PRA). The protein is Anthranilate phosphoribosyltransferase of Staphylococcus aureus (strain Mu3 / ATCC 700698).